We begin with the raw amino-acid sequence, 372 residues long: Dual-specificity RNA methyltransferase RlmN (372 aa).

Glu-92 (proton acceptor) is an active-site residue. The region spanning 98–337 is the Radical SAM core domain; the sequence is ETDRATLCVS…VILRKTRGDD (240 aa). Cys-105 and Cys-342 form a disulfide bridge. Cys-112, Cys-116, and Cys-119 together coordinate [4Fe-4S] cluster. S-adenosyl-L-methionine is bound by residues 166-167, Ser-198, 220-222, and Asn-299; these read GE and SLH. The S-methylcysteine intermediate role is filled by Cys-342.

The protein belongs to the radical SAM superfamily. RlmN family. Requires [4Fe-4S] cluster as cofactor.

It is found in the cytoplasm. The enzyme catalyses adenosine(2503) in 23S rRNA + 2 reduced [2Fe-2S]-[ferredoxin] + 2 S-adenosyl-L-methionine = 2-methyladenosine(2503) in 23S rRNA + 5'-deoxyadenosine + L-methionine + 2 oxidized [2Fe-2S]-[ferredoxin] + S-adenosyl-L-homocysteine. The catalysed reaction is adenosine(37) in tRNA + 2 reduced [2Fe-2S]-[ferredoxin] + 2 S-adenosyl-L-methionine = 2-methyladenosine(37) in tRNA + 5'-deoxyadenosine + L-methionine + 2 oxidized [2Fe-2S]-[ferredoxin] + S-adenosyl-L-homocysteine. Functionally, specifically methylates position 2 of adenine 2503 in 23S rRNA and position 2 of adenine 37 in tRNAs. m2A2503 modification seems to play a crucial role in the proofreading step occurring at the peptidyl transferase center and thus would serve to optimize ribosomal fidelity. This is Dual-specificity RNA methyltransferase RlmN from Histophilus somni (strain 129Pt) (Haemophilus somnus).